A 282-amino-acid polypeptide reads, in one-letter code: NAD(P)H-hydrate epimerase (282 aa).

The transit peptide at 1 to 53 (MSGLRTLLGLGLLVAGSRLPRIASRQSVCRAGPIWWGTQHRSSETMASAAVKY) directs the protein to the mitochondrion. Residues 59-269 (AQAVDEELFN…ALEKKYQLNL (211 aa)) enclose the YjeF N-terminal domain. Residue 113 to 117 (NNGGD) participates in (6S)-NADPHX binding. Asparagine 114 is a K(+) binding site. Position 138 is an N6-succinyllysine (lysine 138). Residue aspartate 179 participates in K(+) binding. (6S)-NADPHX-binding positions include 183–189 (GFSFKGD) and aspartate 212. Residue serine 215 coordinates K(+).

It belongs to the NnrE/AIBP family. As to quaternary structure, homodimer. Interacts with APOA1 and APOA2. Requires K(+) as cofactor. In terms of processing, undergoes physiological phosphorylation during sperm capacitation, downstream to PKA activation.

The protein localises to the mitochondrion. Its subcellular location is the secreted. The catalysed reaction is (6R)-NADHX = (6S)-NADHX. The enzyme catalyses (6R)-NADPHX = (6S)-NADPHX. In terms of biological role, catalyzes the epimerization of the S- and R-forms of NAD(P)HX, a damaged form of NAD(P)H that is a result of enzymatic or heat-dependent hydration. This is a prerequisite for the S-specific NAD(P)H-hydrate dehydratase to allow the repair of both epimers of NAD(P)HX. Accelerates cholesterol efflux from endothelial cells to high-density lipoprotein (HDL) and thereby regulates angiogenesis. This Rattus norvegicus (Rat) protein is NAD(P)H-hydrate epimerase.